Here is a 533-residue protein sequence, read N- to C-terminus: MAKKARIVIIGAGMAGLTAANKLYTSSNNTFELSVVEGGSRIGGRINTSEFSSEKIEMGATWIHGIGGSPVYRIAKETGSLVSDEPWECMDSTIDKAKTFAEGGFEIEPSIVESISGLFTALMELAQGKEISQSDADLSRLAHIYETATRVCSKGSSTSVGSFLKSGFDAYWDSISNGGEEGVKGYGKWSRKSLEEAIFTMFSNTQRTYTSADELSTLDFAAESEYQMFPGEEITIAKGYLSVIHHLASVLPQGVIQLNRKVTKIEWQSNEVKLHFSDGSVVFADHVIVTVSLGVLKAGIETDAELFSPPLPDFKSDAIRRLGYGVVNKLFVEMSQRKFPSLQLVFDREDSEFRFVKIPWWMRRTATITPIHSNSKVLLSWFAGKEALELEKLTDEEIKDAVMTTISCLTGKEVKNDTAKPLTNGSLNDDDEAMKITKVLKSKWGSDPLFRGSYSYVAVGSSGDDLDAMAEPLPKINKKVGQVNGHDQAKVHELQVMFAGEATHRTHYSTTHGAYYSGLREANRLLKHYKCNF.

FAD is bound by residues glutamate 37, arginine 45, valine 262, and glutamate 501.

It belongs to the flavin monoamine oxidase family. FAD is required as a cofactor. Expressed in root vasculature, leaves and stems.

Its subcellular location is the cytoplasm. The catalysed reaction is spermine + O2 + H2O = 3-aminopropanal + spermidine + H2O2. It catalyses the reaction N(1)-acetylspermine + O2 + H2O = 3-acetamidopropanal + spermidine + H2O2. It carries out the reaction norspermine + O2 + H2O = norspermidine + 3-aminopropanal + H2O2. The enzyme catalyses thermospermine + O2 + H2O = 3-aminopropanal + spermidine + H2O2. Its pathway is amine and polyamine degradation; spermine degradation. Functionally, flavoenzyme involved in polyamine back-conversion. Catalyzes the oxidation of the secondary amino group of polyamines, such as spermine and its acetyl derivatives. Substrate preference is spermine &gt; N(1)-acetylspermine &gt; thermospermine &gt; norspermine. Plays an important role in the regulation of polyamine intracellular concentration. Involved in xylem differentiation by controlling thermospermine homeostasis, and participating in the tightly controlled interplay between auxin and cytokinin that is necessary for proper xylem differentiation. Involved in the production of hydrogen peroxide in response to salt and cold stresses. The polypeptide is Probable polyamine oxidase 5 (Arabidopsis thaliana (Mouse-ear cress)).